The following is a 1217-amino-acid chain: ATP-dependent helicase/nuclease subunit A (1217 aa).

The 466-residue stretch at 10–475 folds into the UvrD-like helicase ATP-binding domain; sequence VIWTDAQWQS…IDLSQNFRSR (466 aa). 31–38 is a binding site for ATP; the sequence is AAAGSGKT. In terms of domain architecture, UvrD-like helicase C-terminal spans 476 to 786; sequence KEVLSTTNYI…RMMTIHSSKG (311 aa).

The protein belongs to the helicase family. AddA subfamily. In terms of assembly, heterodimer of AddA and AddB/RexB. Mg(2+) is required as a cofactor.

It carries out the reaction Couples ATP hydrolysis with the unwinding of duplex DNA by translocating in the 3'-5' direction.. The enzyme catalyses ATP + H2O = ADP + phosphate + H(+). The heterodimer acts as both an ATP-dependent DNA helicase and an ATP-dependent, dual-direction single-stranded exonuclease. Recognizes the chi site generating a DNA molecule suitable for the initiation of homologous recombination. The AddA nuclease domain is required for chi fragment generation; this subunit has the helicase and 3' -&gt; 5' nuclease activities. This chain is ATP-dependent helicase/nuclease subunit A, found in Staphylococcus aureus (strain NCTC 8325 / PS 47).